The primary structure comprises 157 residues: Crossover junction endodeoxyribonuclease RuvC (157 aa).

Residues D7, E67, and D139 contribute to the active site. Residues D7, E67, and D139 each coordinate Mg(2+).

This sequence belongs to the RuvC family. As to quaternary structure, homodimer which binds Holliday junction (HJ) DNA. The HJ becomes 2-fold symmetrical on binding to RuvC with unstacked arms; it has a different conformation from HJ DNA in complex with RuvA. In the full resolvosome a probable DNA-RuvA(4)-RuvB(12)-RuvC(2) complex forms which resolves the HJ. Mg(2+) serves as cofactor.

The protein localises to the cytoplasm. The catalysed reaction is Endonucleolytic cleavage at a junction such as a reciprocal single-stranded crossover between two homologous DNA duplexes (Holliday junction).. Its function is as follows. The RuvA-RuvB-RuvC complex processes Holliday junction (HJ) DNA during genetic recombination and DNA repair. Endonuclease that resolves HJ intermediates. Cleaves cruciform DNA by making single-stranded nicks across the HJ at symmetrical positions within the homologous arms, yielding a 5'-phosphate and a 3'-hydroxyl group; requires a central core of homology in the junction. The consensus cleavage sequence is 5'-(A/T)TT(C/G)-3'. Cleavage occurs on the 3'-side of the TT dinucleotide at the point of strand exchange. HJ branch migration catalyzed by RuvA-RuvB allows RuvC to scan DNA until it finds its consensus sequence, where it cleaves and resolves the cruciform DNA. The polypeptide is Crossover junction endodeoxyribonuclease RuvC (Prochlorococcus marinus (strain MIT 9312)).